The sequence spans 339 residues: Putative zinc metalloprotease FN1322 (339 aa).

His17 is a binding site for Zn(2+). The active site involves Glu18. His21 serves as a coordination point for Zn(2+). A run of 3 helical transmembrane segments spans residues 88–110 (FIVLFAGVFMNFLMAFILLFVTA), 262–284 (FGWISIASLCVVLSINIGVLNLL), and 318–335 (GMILLLFFILMISVNDVW). Positions 96-179 (FMNFLMAFIL…ITALVERNGK (84 aa)) constitute a PDZ domain.

The protein belongs to the peptidase M50B family. Requires Zn(2+) as cofactor.

Its subcellular location is the cell membrane. This Fusobacterium nucleatum subsp. nucleatum (strain ATCC 25586 / DSM 15643 / BCRC 10681 / CIP 101130 / JCM 8532 / KCTC 2640 / LMG 13131 / VPI 4355) protein is Putative zinc metalloprotease FN1322.